Reading from the N-terminus, the 271-residue chain is Urease accessory protein UreD (271 aa).

Belongs to the UreD family. UreD, UreF and UreG form a complex that acts as a GTP-hydrolysis-dependent molecular chaperone, activating the urease apoprotein by helping to assemble the nickel containing metallocenter of UreC. The UreE protein probably delivers the nickel.

It localises to the cytoplasm. In terms of biological role, required for maturation of urease via the functional incorporation of the urease nickel metallocenter. The chain is Urease accessory protein UreD from Actinomyces naeslundii.